A 150-amino-acid polypeptide reads, in one-letter code: Arginine repressor (150 aa).

The protein belongs to the ArgR family.

It is found in the cytoplasm. It functions in the pathway amino-acid biosynthesis; L-arginine biosynthesis [regulation]. In terms of biological role, regulates arginine biosynthesis genes. The sequence is that of Arginine repressor from Clostridium botulinum (strain Okra / Type B1).